Here is a 193-residue protein sequence, read N- to C-terminus: Potassium-transporting ATPase KdpC subunit (193 aa).

Residues 14–34 (ITFTFLVLCGLVYPLIVTGIA) traverse the membrane as a helical segment.

Belongs to the KdpC family. In terms of assembly, the system is composed of three essential subunits: KdpA, KdpB and KdpC.

The protein resides in the cell membrane. Its function is as follows. Part of the high-affinity ATP-driven potassium transport (or Kdp) system, which catalyzes the hydrolysis of ATP coupled with the electrogenic transport of potassium into the cytoplasm. This subunit acts as a catalytic chaperone that increases the ATP-binding affinity of the ATP-hydrolyzing subunit KdpB by the formation of a transient KdpB/KdpC/ATP ternary complex. The polypeptide is Potassium-transporting ATPase KdpC subunit (Bacillus cereus (strain AH820)).